Consider the following 136-residue polypeptide: Protein PsiE (136 aa).

The next 4 helical transmembrane spans lie at 15 to 35 (ILQN…VVFL), 55 to 75 (YELV…ALIV), 83 to 103 (HFPL…LIIV), and 108 to 128 (PMDV…LWLC).

Belongs to the PsiE family.

The protein resides in the cell inner membrane. The sequence is that of Protein PsiE from Salmonella agona (strain SL483).